The following is a 164-amino-acid chain: HTH-type transcriptional regulator PapX (164 aa).

The HTH marR-type domain maps to 25–159; that stretch reads EHLLMQLCIR…FEVISKKLLA (135 aa).

The protein localises to the cytoplasm. The polypeptide is HTH-type transcriptional regulator PapX (papX) (Escherichia coli).